Reading from the N-terminus, the 509-residue chain is 2-isopropylmalate synthase (509 aa).

In terms of domain architecture, Pyruvate carboxyltransferase spans 4–266 (VRIFDTTLRD…YTGIKTEEIY (263 aa)). Mn(2+) is bound by residues Asp-13, His-201, His-203, and Asn-237. The interval 390-509 (TLDYFHISTG…FDYQAKGEKQ (120 aa)) is regulatory domain.

It belongs to the alpha-IPM synthase/homocitrate synthase family. LeuA type 1 subfamily. In terms of assembly, homodimer. Requires Mn(2+) as cofactor.

The protein resides in the cytoplasm. The catalysed reaction is 3-methyl-2-oxobutanoate + acetyl-CoA + H2O = (2S)-2-isopropylmalate + CoA + H(+). It functions in the pathway amino-acid biosynthesis; L-leucine biosynthesis; L-leucine from 3-methyl-2-oxobutanoate: step 1/4. Its function is as follows. Catalyzes the condensation of the acetyl group of acetyl-CoA with 3-methyl-2-oxobutanoate (2-ketoisovalerate) to form 3-carboxy-3-hydroxy-4-methylpentanoate (2-isopropylmalate). This is 2-isopropylmalate synthase from Carboxydothermus hydrogenoformans (strain ATCC BAA-161 / DSM 6008 / Z-2901).